The sequence spans 325 residues: Acetyl-coenzyme A carboxylase carboxyl transferase subunit alpha (325 aa).

Positions 38 to 292 (KLEKRLHALE…DQVLEKSLKQ (255 aa)) constitute a CoA carboxyltransferase C-terminal domain.

Belongs to the AccA family. As to quaternary structure, acetyl-CoA carboxylase is a heterohexamer composed of biotin carboxyl carrier protein (AccB), biotin carboxylase (AccC) and two subunits each of ACCase subunit alpha (AccA) and ACCase subunit beta (AccD).

Its subcellular location is the cytoplasm. It carries out the reaction N(6)-carboxybiotinyl-L-lysyl-[protein] + acetyl-CoA = N(6)-biotinyl-L-lysyl-[protein] + malonyl-CoA. It participates in lipid metabolism; malonyl-CoA biosynthesis; malonyl-CoA from acetyl-CoA: step 1/1. Functionally, component of the acetyl coenzyme A carboxylase (ACC) complex. First, biotin carboxylase catalyzes the carboxylation of biotin on its carrier protein (BCCP) and then the CO(2) group is transferred by the carboxyltransferase to acetyl-CoA to form malonyl-CoA. This Halalkalibacterium halodurans (strain ATCC BAA-125 / DSM 18197 / FERM 7344 / JCM 9153 / C-125) (Bacillus halodurans) protein is Acetyl-coenzyme A carboxylase carboxyl transferase subunit alpha.